A 286-amino-acid polypeptide reads, in one-letter code: 2,3,4,5-tetrahydropyridine-2,6-dicarboxylate N-succinyltransferase (286 aa).

Substrate-binding residues include Arg109 and Asp146.

Belongs to the transferase hexapeptide repeat family. In terms of assembly, homotrimer.

Its subcellular location is the cytoplasm. The catalysed reaction is (S)-2,3,4,5-tetrahydrodipicolinate + succinyl-CoA + H2O = (S)-2-succinylamino-6-oxoheptanedioate + CoA. The protein operates within amino-acid biosynthesis; L-lysine biosynthesis via DAP pathway; LL-2,6-diaminopimelate from (S)-tetrahydrodipicolinate (succinylase route): step 1/3. This chain is 2,3,4,5-tetrahydropyridine-2,6-dicarboxylate N-succinyltransferase, found in Bartonella tribocorum (strain CIP 105476 / IBS 506).